Reading from the N-terminus, the 509-residue chain is Probable cytochrome P450 519B1 (509 aa).

Residues 1-21 (MNLINLILYFILFWIVFDFIR) form a helical membrane-spanning segment. Cys456 is a heme binding site.

This sequence belongs to the cytochrome P450 family. It depends on heme as a cofactor.

The protein localises to the membrane. The chain is Probable cytochrome P450 519B1 (cyp519B1) from Dictyostelium discoideum (Social amoeba).